The primary structure comprises 162 residues: NADH-quinone oxidoreductase subunit I (162 aa).

2 consecutive 4Fe-4S ferredoxin-type domains span residues 54–83 (RRYE…INST) and 93–122 (SSYE…ETNI). Residues Cys63, Cys66, Cys69, Cys73, Cys102, Cys105, Cys108, and Cys112 each contribute to the [4Fe-4S] cluster site.

It belongs to the complex I 23 kDa subunit family. As to quaternary structure, NDH-1 is composed of 14 different subunits. Subunits NuoA, H, J, K, L, M, N constitute the membrane sector of the complex. It depends on [4Fe-4S] cluster as a cofactor.

Its subcellular location is the cell inner membrane. It catalyses the reaction a quinone + NADH + 5 H(+)(in) = a quinol + NAD(+) + 4 H(+)(out). NDH-1 shuttles electrons from NADH, via FMN and iron-sulfur (Fe-S) centers, to quinones in the respiratory chain. The immediate electron acceptor for the enzyme in this species is believed to be ubiquinone. Couples the redox reaction to proton translocation (for every two electrons transferred, four hydrogen ions are translocated across the cytoplasmic membrane), and thus conserves the redox energy in a proton gradient. The chain is NADH-quinone oxidoreductase subunit I from Francisella tularensis subsp. holarctica (strain FTNF002-00 / FTA).